We begin with the raw amino-acid sequence, 353 residues long: Nicotinate-nucleotide--dimethylbenzimidazole phosphoribosyltransferase (353 aa).

Glutamate 318 serves as the catalytic Proton acceptor.

This sequence belongs to the CobT family.

It carries out the reaction 5,6-dimethylbenzimidazole + nicotinate beta-D-ribonucleotide = alpha-ribazole 5'-phosphate + nicotinate + H(+). It functions in the pathway nucleoside biosynthesis; alpha-ribazole biosynthesis; alpha-ribazole from 5,6-dimethylbenzimidazole: step 1/2. In terms of biological role, catalyzes the synthesis of alpha-ribazole-5'-phosphate from nicotinate mononucleotide (NAMN) and 5,6-dimethylbenzimidazole (DMB). This chain is Nicotinate-nucleotide--dimethylbenzimidazole phosphoribosyltransferase, found in Roseiflexus castenholzii (strain DSM 13941 / HLO8).